The following is a 472-amino-acid chain: NALCN channel auxiliary factor 2 (472 aa).

Residues Leu-47 to Ala-67 traverse the membrane as a helical segment. The disordered stretch occupies residues Ala-77–Cys-114. Residues Pro-90–Pro-110 are compositionally biased toward pro residues. 2 N-linked (GlcNAc...) asparagine glycosylation sites follow: Asn-120 and Asn-193. Residues Leu-433 to Gly-453 form a helical membrane-spanning segment.

The protein belongs to the NALF family.

It is found in the membrane. Probable component of the NALCN channel complex, a channel that regulates the resting membrane potential and controls neuronal excitability. The protein is NALCN channel auxiliary factor 2 of Homo sapiens (Human).